A 420-amino-acid polypeptide reads, in one-letter code: Maturation protein A2 (420 aa).

RNA-binding regions lie at residues 158–176 (IKYL…RAVK), 226–236 (QNRHDKIQRLL), and 294–298 (PVSDW).

Belongs to the Leviviricetes maturation protein family. In terms of assembly, interacts with host MurA; this interaction inhibits the first step in host cell wall synthesis. Interacts with the capsid protein.

Its subcellular location is the virion. Functionally, induces host cell lysis. Inhibits host MurA activity thereby blocking the synthesis of murein precursors necessary for the host cell wall biosynthesis. May be responsible for the attachment to the host pilus. Makes extensive contacts with the viral genome. In Escherichia virus Qbeta (Bacteriophage Q-beta), this protein is Maturation protein A2.